The sequence spans 349 residues: DNA-directed RNA polymerase subunit alpha (349 aa).

The alpha N-terminal domain (alpha-NTD) stretch occupies residues 1-226; that stretch reads MLIAQRPTLI…GLFGLAQELN (226 aa). The segment at 241–349 is alpha C-terminal domain (alpha-CTD); sequence AALAADLALP…GAEFIETEQY (109 aa). The interval 309 to 349 is disordered; the sequence is KDSPPGFDPRQAVDTYGTDAYSPSFSDPSDDGAEFIETEQY. Acidic residues predominate over residues 336–349; sequence PSDDGAEFIETEQY.

This sequence belongs to the RNA polymerase alpha chain family. In terms of assembly, homodimer. The RNAP catalytic core consists of 2 alpha, 1 beta, 1 beta' and 1 omega subunit. When a sigma factor is associated with the core the holoenzyme is formed, which can initiate transcription.

It catalyses the reaction RNA(n) + a ribonucleoside 5'-triphosphate = RNA(n+1) + diphosphate. In terms of biological role, DNA-dependent RNA polymerase catalyzes the transcription of DNA into RNA using the four ribonucleoside triphosphates as substrates. The protein is DNA-directed RNA polymerase subunit alpha of Frankia casuarinae (strain DSM 45818 / CECT 9043 / HFP020203 / CcI3).